The primary structure comprises 102 residues: Urease subunit beta (102 aa).

The protein belongs to the urease beta subunit family. In terms of assembly, heterotrimer of UreA (gamma), UreB (beta) and UreC (alpha) subunits. Three heterotrimers associate to form the active enzyme.

Its subcellular location is the cytoplasm. It catalyses the reaction urea + 2 H2O + H(+) = hydrogencarbonate + 2 NH4(+). It functions in the pathway nitrogen metabolism; urea degradation; CO(2) and NH(3) from urea (urease route): step 1/1. This Trichodesmium erythraeum (strain IMS101) protein is Urease subunit beta.